A 330-amino-acid chain; its full sequence is Cathepsin K (330 aa).

A signal peptide spans 1–16 (MWGLKVVLLLPVMSSA). A propeptide spans 17–115 (LYPEEILDTQ…TLYIPDWEGR (99 aa)) (activation peptide). The N-linked (GlcNAc...) asparagine glycan is linked to N104. 3 disulfide bridges follow: C137–C178, C171–C211, and C270–C319. The active site involves C140. Residues H277 and N297 contribute to the active site.

It belongs to the peptidase C1 family. As to expression, expressed in the thyroid epithelial cells.

It localises to the lysosome. The protein localises to the secreted. Its subcellular location is the apical cell membrane. The catalysed reaction is Broad proteolytic activity. With small-molecule substrates and inhibitors, the major determinant of specificity is P2, which is preferably Leu, Met &gt; Phe, and not Arg.. Functionally, thiol protease involved in osteoclastic bone resorption and may participate partially in the disorder of bone remodeling. Displays potent endoprotease activity against fibrinogen at acid pH. May play an important role in extracellular matrix degradation. Involved in the release of thyroid hormone thyroxine (T4) by limited proteolysis of TG/thyroglobulin in the thyroid follicle lumen. The polypeptide is Cathepsin K (CTSK) (Sus scrofa (Pig)).